The following is a 450-amino-acid chain: Molybdate-anion transporter (450 aa).

The next 12 membrane-spanning stretches (helical) occupy residues 1 to 21, 43 to 63, 79 to 99, 128 to 148, 176 to 196, 198 to 218, 249 to 269, 278 to 298, 311 to 331, 344 to 364, 376 to 396, and 409 to 429; these read MLVTAYLAFVVLLASCLGLEL, LDFYQVYFLALAADWLQAPYL, ILYVCGLASTVLFGLVASSLV, FVLLVGRALGGLSTALLFSAF, FWNHVLAVAAGVAAEAVACWM, LGPVAPFVAAIPLLALAGALA, VLLLGTIQALFESVIFIFVFL, GAPLGIIFSSFMAASLLGSSL, PMHLLSLAVLIVVFSLFMLTF, FIAFLLIELACGLYFPSMSFL, GVLNWFRVPLHLLACLGLLVL, and FSICSAVMVMALLAVVGLFTV.

The protein belongs to the major facilitator superfamily.

It is found in the cell membrane. Mediates high-affinity intracellular uptake of the rare oligo-element molybdenum. The sequence is that of Molybdate-anion transporter (MFSD5) from Bos taurus (Bovine).